The chain runs to 232 residues: Flagellar L-ring protein (232 aa).

Positions 1–21 (MQKYALHAYPVMALMVATLTG) are cleaved as a signal peptide. Cys-22 carries the N-palmitoyl cysteine lipid modification. Cys-22 carries the S-diacylglycerol cysteine lipid modification.

This sequence belongs to the FlgH family. As to quaternary structure, the basal body constitutes a major portion of the flagellar organelle and consists of four rings (L,P,S, and M) mounted on a central rod.

It localises to the cell outer membrane. It is found in the bacterial flagellum basal body. Its function is as follows. Assembles around the rod to form the L-ring and probably protects the motor/basal body from shearing forces during rotation. In Salmonella gallinarum (strain 287/91 / NCTC 13346), this protein is Flagellar L-ring protein.